The following is a 266-amino-acid chain: PTS system mannose-specific EIIC component (266 aa).

Position 1 is an N-formylmethionine (M1). Topologically, residues 1–4 (MEIT) are periplasmic. Positions 1–237 (MEITTLQIVL…GVIGTVMAVL (237 aa)) constitute a PTS EIIC type-4 domain. Residues 5–43 (TLQIVLVFIVACIAGMGSILDEFQFHRPLIACTLVGIVL) lie within the membrane without spanning it. The Periplasmic segment spans residues 44-46 (GDM). The stretch at 47 to 86 (KTGIIIGGTLEMIALGWMNIGAAVAPDAALASIISTILVI) is an intramembrane region. Residues 87–90 (AGHQ) lie on the Periplasmic side of the membrane. The chain crosses the lipid bilayer at residues 91–124 (SIGAGIALAIPLAAAGQVLTIIVRTITVAFQHAA). Topologically, residues 125–132 (DKAADNGN) are cytoplasmic. The hydrophobic stretch at 133–160 (LTAISWIHVSSLFLQAMRVAIPAVIVAL) threads the membrane. Residues 161-176 (SVGTSEVQNMLNAIPE) are Periplasmic-facing. Over 177 to 200 (VVTNGLNIAGGMIVVVGYAMVINM) the chain traverses the membrane. The Cytoplasmic segment spans residues 201-207 (MRAGYLM). Positions 208–218 (PFFYLGFVTAA) form a transmembrane segment. Residues 219-224 (FTNFNL) are Periplasmic-facing. A transmembrane span lies at residues 225 to 242 (VALGVIGTVMAVLYIQLS). The Cytoplasmic portion of the chain corresponds to 243-266 (PKYNRVAGAPAQAAGNNDLDNELD).

As to quaternary structure, homotrimer of protomers that are composed of two subunits, IIC and IID.

It is found in the cell inner membrane. In terms of biological role, the phosphoenolpyruvate-dependent sugar phosphotransferase system (sugar PTS), a major carbohydrate active transport system, catalyzes the phosphorylation of incoming sugar substrates concomitantly with their translocation across the cell membrane. The enzyme II ManXYZ PTS system is involved in mannose transport. The polypeptide is PTS system mannose-specific EIIC component (manY) (Escherichia coli O157:H7).